The chain runs to 103 residues: OMEGA-ectatommitoxin(02)-Rm1d (103 aa).

The N-terminal stretch at 1 to 30 (MKDSYISIVIAYLMVTFILVSSMPIEGEKR) is a signal peptide. 3 disulfide bridges follow: C39-C54, C49-C70, and C72-C81. The 40-residue stretch at 43–82 (LNDENYCFNGKCVHLVAQDEPGKPYYSCICDEFYIGERCG) folds into the EGF-like domain.

The protein belongs to the EGF domain peptide family. In terms of tissue distribution, expressed by the venom gland.

The protein localises to the secreted. Ant peptide with probable defensive activity which acts as a potent agonist of the mammalian epidermal growth factor receptor (EGFR). Mimics, both structurally and functionally, vertebrate epidermal growth factor (EGF) peptide hormones. In vivo, intraplantar injection in mice causes long-lasting (several days) hypersensitivity of the injected paw to both mechanical and thermal stimuli. Its long-lasting effect is unusual for venom toxins whose effects are usually immediate. One possible explanation is that it would reduce the duration of a nest attack, discourage future attacks, or enhance the actions of subsequent exposure to other pain-inducing venom peptides. This chain is OMEGA-ectatommitoxin(02)-Rm1d, found in Rhytidoponera metallica (Australian green-headed ant).